A 309-amino-acid chain; its full sequence is MQLQFLGTGAGQPSKARNVSSLVLKLLEEINEVWMFDCGEGTQHQILETTIKPRKISKIFITHLHGDHIFGLPGFLSSRSFQANEEQTNLEIYGPKGIKNFVLSSLRVSGSRLPYRIDFHEFDENSLGKILETDKFTVYADKLDHTIFCVGYRVMQKDLEGTLDADKLREVGVPFGPLFGKVKNGQDIVLEDGTKIIAADYISAPRPGKIIAILGDTRKTSASVRLAVAADVLVHEATYGKGDEKLARNHGHSTNMQAAEVAKEAGAKRLLLNHISARFLAKDISQMRRDASAVFEKVHVVKDLEEVEI.

Zn(2+) is bound by residues H63, H65, D67, H68, H145, D216, and H274. D67 serves as the catalytic Proton acceptor.

Belongs to the RNase Z family. As to quaternary structure, homodimer. Zn(2+) is required as a cofactor.

It carries out the reaction Endonucleolytic cleavage of RNA, removing extra 3' nucleotides from tRNA precursor, generating 3' termini of tRNAs. A 3'-hydroxy group is left at the tRNA terminus and a 5'-phosphoryl group is left at the trailer molecule.. Its function is as follows. Zinc phosphodiesterase, which displays some tRNA 3'-processing endonuclease activity. Probably involved in tRNA maturation, by removing a 3'-trailer from precursor tRNA. This Streptococcus sanguinis (strain SK36) protein is Ribonuclease Z.